The primary structure comprises 393 residues: Protein TsgA (393 aa).

Helical transmembrane passes span 11–31 (WISFLSYALTGALVIVTGMVM), 51–71 (FLNAGILISIFLNAWLMEIIP), 78–98 (FGFILMVLAVAGLMFSHSLAL), 101–121 (AAMFVLGLVSGITMSIGTFLI), 134–154 (LLFTDSFFSMAGMIFPMVAAF), 162–182 (WYWVYACIGLVYLAIFILTFG), 206–226 (IGVLFLAVAALCYILGQLGFI), 245–265 (ALVSDFWMSYMFGMWAFSFIL), 273–293 (ILTVLAGMAAVLMYLFITGTQ), 298–318 (WFILTLGFFSSAIYTSIITLG), 332–352 (FILTCGTIGTMLTFVVTGPIV), and 361–381 (LLTANGLYAVVFVMCFALGFV).

It belongs to the major facilitator superfamily. TsgA family.

The protein localises to the cell inner membrane. This chain is Protein TsgA, found in Salmonella paratyphi B (strain ATCC BAA-1250 / SPB7).